The primary structure comprises 398 residues: ATP-dependent RNA helicase eIF4A (398 aa).

Residues 25 to 53 (DSFDSMELKPELLRGIYAYGFERPSAIQQ) carry the Q motif motif. A Helicase ATP-binding domain is found at 56–226 (ILPIIKGNDV…TKFMRDPVRI (171 aa)). An ATP-binding site is contributed by 69–76 (AQSGTGKT). Residues 174 to 177 (DEAD) carry the DEAD box motif. Residues 237-398 (GIKQFYIAVE…EMPMNVADLI (162 aa)) enclose the Helicase C-terminal domain.

The protein belongs to the DEAD box helicase family. eIF4A subfamily. In terms of assembly, component of the eIF4F complex, which composition varies with external and internal environmental conditions. It is composed of at least eIF4A, eIF4E and eIF4G.

It localises to the cytoplasm. It carries out the reaction ATP + H2O = ADP + phosphate + H(+). Functionally, ATP-dependent RNA helicase which is a subunit of the eIF4F complex involved in cap recognition and is required for mRNA binding to ribosome. In the current model of translation initiation, eIF4A unwinds RNA secondary structures in the 5'-UTR of mRNAs which is necessary to allow efficient binding of the small ribosomal subunit, and subsequent scanning for the initiator codon. This chain is ATP-dependent RNA helicase eIF4A (tif1), found in Neosartorya fischeri (strain ATCC 1020 / DSM 3700 / CBS 544.65 / FGSC A1164 / JCM 1740 / NRRL 181 / WB 181) (Aspergillus fischerianus).